The following is a 244-amino-acid chain: Tyrosine recombinase XerD-like (244 aa).

In terms of domain architecture, Core-binding (CB) spans 1 to 73 (MRDRISAFLE…ACNQFLYFLY (73 aa)). One can recognise a Tyr recombinase domain in the interval 90–244 (AEKKTEKPEI…KTVLTLEKYR (155 aa)). Active-site residues include K150 and R211. The O-(3'-phospho-DNA)-tyrosine intermediate role is filled by Y243.

Belongs to the 'phage' integrase family. XerD-like subfamily.

Its subcellular location is the cytoplasm. Putative tyrosine recombinase. Not involved in the cutting and rejoining of the recombining DNA molecules on dif(SL) site. This is Tyrosine recombinase XerD-like from Streptococcus pneumoniae serotype 2 (strain D39 / NCTC 7466).